The primary structure comprises 131 residues: Small ribosomal subunit protein uS9 (131 aa).

It belongs to the universal ribosomal protein uS9 family.

The protein is Small ribosomal subunit protein uS9 of Mesoplasma florum (strain ATCC 33453 / NBRC 100688 / NCTC 11704 / L1) (Acholeplasma florum).